Consider the following 241-residue polypeptide: Putative inactive serine protease 58 (241 aa).

The first 17 residues, 1-17 (MKLAFLCILSTLLRTFA), serve as a signal peptide directing secretion. A Peptidase S1 domain is found at 18–239 (YNPDHIAGTT…YLPWIEDTMK (222 aa)). Residues Cys41 and Cys57 are joined by a disulfide bond. Catalysis depends on charge relay system residues His56 and Asp101. Disulfide bonds link Cys133/Cys201, Cys165/Cys180, and Cys191/Cys215. Asn156 carries N-linked (GlcNAc...) asparagine glycosylation.

It belongs to the peptidase S1 family.

Its subcellular location is the secreted. The enzyme catalyses Preferential cleavage: Arg-|-Xaa, Lys-|-Xaa.. The sequence is that of Putative inactive serine protease 58 (Prss58) from Mus musculus (Mouse).